The chain runs to 81 residues: RNA-binding protein Hfq (81 aa).

The 61-residue stretch at 11–71 (DIFLNNARKN…ISTITPTKPI (61 aa)) folds into the Sm domain.

The protein belongs to the Hfq family. Homohexamer.

In terms of biological role, RNA chaperone that binds small regulatory RNA (sRNAs) and mRNAs to facilitate mRNA translational regulation in response to envelope stress, environmental stress and changes in metabolite concentrations. Also binds with high specificity to tRNAs. The sequence is that of RNA-binding protein Hfq from Clostridium beijerinckii (strain ATCC 51743 / NCIMB 8052) (Clostridium acetobutylicum).